A 458-amino-acid chain; its full sequence is Phosphoglucosamine mutase (458 aa).

Ser106 (phosphoserine intermediate) is an active-site residue. Residues Ser106, Asp247, Asp249, and Asp251 each coordinate Mg(2+). Ser106 is modified (phosphoserine).

It belongs to the phosphohexose mutase family. Mg(2+) serves as cofactor. Post-translationally, activated by phosphorylation.

It catalyses the reaction alpha-D-glucosamine 1-phosphate = D-glucosamine 6-phosphate. Functionally, catalyzes the conversion of glucosamine-6-phosphate to glucosamine-1-phosphate. This is Phosphoglucosamine mutase from Chlamydia trachomatis serovar A (strain ATCC VR-571B / DSM 19440 / HAR-13).